The sequence spans 488 residues: MAEATDVVLVGGGIMSATLGVLLKELEPSWEITLIERLEDVALESSNAWNNAGTGHSALCELNYAPLGANGIIDPARALNIAEQFHVSRQFWATLVAEGKLEDNSFINAVPHMSLVMNEDHCSYLQKRYDAFKTQKLFENMEFSTDRNKISDWAPLMMRGRDENQPVAANYSAEGTDVDFGRLTRQMVKYLQGKGVKTEFNRHVEDIKRESDGAWVLKTADTRNPDGQLTLRTRFLFLGAGGGALTLLQKSGIPEGKGYGGFPVSGLFFRNSTPETAEQHNAKVYGQASVGAPPMSVPHLDTRNVDGKRHLMFGPYAGFRSNFLKQGSLMDLPLSIHMDNLYPMLCAGWANMPLTKYLLGELRKTKEERFASLLEYYPEANPDDWELITAGQRVQIIKKDSEKGGVLQFGTEIVAHADGSLAALLGASPGASTAVPLMIRLMHQCFPERAPSWEGRLKELVPGYGIKLNENPERADEIIAYTAKVLDI.

This sequence belongs to the MQO family. Requires FAD as cofactor.

The catalysed reaction is (S)-malate + a quinone = a quinol + oxaloacetate. The protein operates within carbohydrate metabolism; tricarboxylic acid cycle; oxaloacetate from (S)-malate (quinone route): step 1/1. This is Probable malate:quinone oxidoreductase from Neisseria meningitidis serogroup C / serotype 2a (strain ATCC 700532 / DSM 15464 / FAM18).